A 245-amino-acid chain; its full sequence is METSQGWLVACVLAVTLVWTVAEDVCRAPNGKDGVAGIPGRPGRPGLKGERGEPGAAGIRTGIRGLKGDMGESGPPGKPGNVGFPGPTGPLGNSGPQGLKGVKGNPGNIRDQPRPAFSAIRQNPPTYGNVVVFDKVLTNQENPYQNRTGHFICAVPGFYYFTFQVISKWDLCLSIVSSSRGQPRNSLGFCDTNSKGLFQVLAGGTVLQLQRGDEVWIEKDPAKGRIYQGTEADSIFSGFLIFPSA.

The N-terminal stretch at 1-22 is a signal peptide; the sequence is METSQGWLVACVLAVTLVWTVA. The Collagen-like domain occupies 31–109; it reads GKDGVAGIPG…KGVKGNPGNI (79 aa). The disordered stretch occupies residues 35–111; it reads VAGIPGRPGR…VKGNPGNIRD (77 aa). 2 positions are modified to 4-hydroxyproline: P39 and P45. K48 bears the 5-hydroxylysine mark. K48 is a glycosylation site (O-linked (Gal...) hydroxylysine). P54 carries the post-translational modification 4-hydroxyproline. The residue at position 67 (K67) is a 5-hydroxylysine. An O-linked (Gal...) hydroxylysine glycan is attached at K67. P79 and P85 each carry 4-hydroxyproline. Residue K100 is modified to 5-hydroxylysine. K100 carries O-linked (Gal...) hydroxylysine glycosylation. The C1q domain maps to 110 to 245; that stretch reads RDQPRPAFSA…FSGFLIFPSA (136 aa). An N-linked (GlcNAc...) asparagine glycan is attached at N146. Cysteines 172 and 190 form a disulfide. Q199 contacts Ca(2+).

In terms of assembly, core component of the complement C1 complex, a calcium-dependent complex composed of 1 molecule of the C1Q subcomplex, 2 molecules of C1R and 2 molecules of C1S. The C1Q subcomplex is composed 18 subunits: 3 chains of C1QA, C1QB, and C1QC trimerize to form 6 collagen-like triple helices connected to six globular ligand-recognition modules (C1q domain). Interacts with CR1 (via Sushi 24 and Sushi 25 domains). Interacts (via C-terminus) with CD33; this interaction activates CD33 inhibitory motifs. Post-translationally, O-linked glycans are assumed to be the Glc-Gal disaccharides typically found as secondary modifications of hydroxylated lysines in collagen-like domains.

It is found in the secreted. Its subcellular location is the cell surface. Its activity is regulated as follows. The C1Q subcomplex is inhibited by sulfated molecules, such as triterpenoid sulfates, heparan sulfate, or chondroitin sulfates. Functionally, core component of the complement C1 complex, a multiprotein complex that initiates the classical pathway of the complement system, a cascade of proteins that leads to phagocytosis and breakdown of pathogens and signaling that strengthens the adaptive immune system. The classical complement pathway is initiated by the C1Q subcomplex of the C1 complex, which specifically binds IgG or IgM immunoglobulins complexed with antigens, forming antigen-antibody complexes on the surface of pathogens: C1QA, together with C1QB and C1QC, specifically recognizes and binds the Fc regions of IgG or IgM via its C1q domain. Immunoglobulin-binding activates the proenzyme C1R, which cleaves C1S, initiating the proteolytic cascade of the complement system. The C1Q subcomplex is activated by a hexamer of IgG complexed with antigens, while it is activated by a pentameric IgM. The C1Q subcomplex also recognizes and binds phosphatidylserine exposed on the surface of cells undergoing programmed cell death, possibly promoting activation of the complement system. This Rattus norvegicus (Rat) protein is Complement C1q subcomponent subunit A.